Reading from the N-terminus, the 155-residue chain is Probable jacalin-related lectin 26 (155 aa).

The next 2 membrane-spanning stretches (helical) occupy residues 26–48 and 127–149; these read AYLYLSFHLKLLYSVPASYIAMI and VSFVSITIIYFCVCVRSGQVLFL. One can recognise a Jacalin-type lectin domain in the interval 47–155; sequence MIRAGSVGKK…VLFLMKFKRS (109 aa).

Belongs to the jacalin lectin family.

The protein resides in the membrane. In Arabidopsis thaliana (Mouse-ear cress), this protein is Probable jacalin-related lectin 26 (JAL26).